The chain runs to 775 residues: Minichromosome maintenance protein 5 (775 aa).

Residues Met1 to Asp22 are disordered. Residues Leu366 to Ile573 enclose the MCM domain. Gly416–Ser423 provides a ligand contact to ATP. Positions Ser548–Asp551 match the Arginine finger motif.

The protein belongs to the MCM family. Component of the MCM2-7 complex. The complex forms a toroidal hexameric ring with the proposed subunit order MCM2-MCM6-MCM4-MCM7-MCM3-MCM5; loaded onto DNA, forms a head-head double hexamer. Interacts with CSM1.

It localises to the nucleus. It catalyses the reaction ATP + H2O = ADP + phosphate + H(+). Its function is as follows. Acts as a component of the MCM2-7 complex (MCM complex) which is the putative replicative helicase essential for 'once per cell cycle' DNA replication initiation and elongation in eukaryotic cells. The active ATPase sites in the MCM2-7 ring are formed through the interaction surfaces of two neighboring subunits such that a critical structure of a conserved arginine finger motif is provided in trans relative to the ATP-binding site of the Walker A box of the adjacent subunit. The six ATPase active sites, however, are likely to contribute differentially to the complex helicase activity; specifically the MCM2-MCM5 association is proposed to be reversible and to mediate a open ring conformation which may facilitate DNA loading. Once loaded onto DNA, double hexamers can slide on dsDNA in the absence of ATPase activity. The chain is Minichromosome maintenance protein 5 (MCM5) from Saccharomyces cerevisiae (strain ATCC 204508 / S288c) (Baker's yeast).